Consider the following 575-residue polypeptide: Sulfite reductase [NADPH] hemoprotein beta-component (575 aa).

[4Fe-4S] cluster is bound by residues Cys439, Cys445, Cys484, and Cys488. Residue Cys488 coordinates siroheme.

It belongs to the nitrite and sulfite reductase 4Fe-4S domain family. As to quaternary structure, alpha(8)-beta(8). The alpha component is a flavoprotein, the beta component is a hemoprotein. The cofactor is siroheme. [4Fe-4S] cluster is required as a cofactor.

It catalyses the reaction hydrogen sulfide + 3 NADP(+) + 3 H2O = sulfite + 3 NADPH + 4 H(+). The protein operates within sulfur metabolism; hydrogen sulfide biosynthesis; hydrogen sulfide from sulfite (NADPH route): step 1/1. Its function is as follows. Component of the sulfite reductase complex that catalyzes the 6-electron reduction of sulfite to sulfide. This is one of several activities required for the biosynthesis of L-cysteine from sulfate. This chain is Sulfite reductase [NADPH] hemoprotein beta-component, found in Blochmanniella pennsylvanica (strain BPEN).